The sequence spans 338 residues: Heat-inducible transcription repressor HrcA (338 aa).

It belongs to the HrcA family.

Negative regulator of class I heat shock genes (grpE-dnaK-dnaJ and groELS operons). Prevents heat-shock induction of these operons. The chain is Heat-inducible transcription repressor HrcA from Nitrosomonas europaea (strain ATCC 19718 / CIP 103999 / KCTC 2705 / NBRC 14298).